The following is a 238-amino-acid chain: 4-hydroxy-tetrahydrodipicolinate reductase (238 aa).

Gly12–Met17 is a binding site for NAD(+). Arg40 contributes to the NADP(+) binding site. Residues Gly93–Thr95 and Ala117–Phe120 contribute to the NAD(+) site. His149 (proton donor/acceptor) is an active-site residue. His150 is a binding site for (S)-2,3,4,5-tetrahydrodipicolinate. The Proton donor role is filled by Lys153. Gly159–Thr160 provides a ligand contact to (S)-2,3,4,5-tetrahydrodipicolinate.

It belongs to the DapB family.

It localises to the cytoplasm. It carries out the reaction (S)-2,3,4,5-tetrahydrodipicolinate + NAD(+) + H2O = (2S,4S)-4-hydroxy-2,3,4,5-tetrahydrodipicolinate + NADH + H(+). It catalyses the reaction (S)-2,3,4,5-tetrahydrodipicolinate + NADP(+) + H2O = (2S,4S)-4-hydroxy-2,3,4,5-tetrahydrodipicolinate + NADPH + H(+). Its pathway is amino-acid biosynthesis; L-lysine biosynthesis via DAP pathway; (S)-tetrahydrodipicolinate from L-aspartate: step 4/4. In terms of biological role, catalyzes the conversion of 4-hydroxy-tetrahydrodipicolinate (HTPA) to tetrahydrodipicolinate. In Xanthomonas euvesicatoria pv. vesicatoria (strain 85-10) (Xanthomonas campestris pv. vesicatoria), this protein is 4-hydroxy-tetrahydrodipicolinate reductase.